The primary structure comprises 235 residues: Eukaryotic translation initiation factor 4E-1 (235 aa).

Residues 1–52 form a disordered region; that stretch reads MVVEDSMKATSAEDLSNSIANQNPRGRGGDEDEELEEGEIVGDDDLDSSNLS. A compositionally biased stretch (polar residues) spans 13–24; sequence EDLSNSIANQNP. Positions 30–47 are enriched in acidic residues; the sequence is DEDEELEEGEIVGDDDLD. EIF4G-binding regions lie at residues 60 to 63 and 70 to 106; these read HPLE and FDNPSAKSKQATWGASIRPIYTFSTVEEFWSVYNNIH. MRNA is bound by residues 78–83, lysine 110, and 128–129; these read KQATWG and WE. The cysteines at positions 133 and 171 are disulfide-linked. Positions 154–163 are EIF4G-binding; that stretch reads YTLLAMIGEQ. Residues 178 to 183 and 223 to 227 each bind mRNA; these read RSGQDK and KKFDR.

The protein belongs to the eukaryotic initiation factor 4E family. EIF4F is a multi-subunit complex, the composition of which varies with external and internal environmental conditions. It is composed of at least EIF4A, EIF4E and EIF4G. EIF4E is also known to interact with other partners. Interacts directly with eIF4G. In higher plants two isoforms of EIF4F have been identified, named isoform EIF4F and isoform EIF(iso)4F. Isoform EIF4F has subunits p220 and p26, whereas isoform EIF(iso)4F has subunits p82 and p28. As to quaternary structure, (Microbial infection) Interacts with potyvirus viral genome-linked protein (VPg); this interaction is possible in susceptible hosts but impaired in resistant plants. According to the redox status, the Cys-133-Cys-171 disulfide bridge may have a role in regulating protein function by affecting its ability to bind capped mRNA.

The protein localises to the nucleus. It is found in the cytoplasm. Component of the protein complex eIF4F, which is involved in the recognition of the mRNA cap, ATP-dependent unwinding of 5'-terminal secondary structure and recruitment of mRNA to the ribosome. Recognizes and binds the 7-methylguanosine-containing mRNA cap during an early step in the initiation of protein synthesis and facilitates ribosome binding by inducing the unwinding of the mRNAs secondary structures. Key component of recessive resistance to potyviruses and Tombusviridae genus Carmovirus such as melon necrotic spot virus (MNSV). Its function is as follows. (Microbial infection) Susceptibility host factor required for viral infection by recruiting viral RNAs, including uncapped and non-polyadenylated RNA, to the host ribosomal complex via an interaction with viral genome-linked protein (VPg). This chain is Eukaryotic translation initiation factor 4E-1, found in Cucumis melo (Muskmelon).